A 154-amino-acid chain; its full sequence is MTDPAQNILDIRQILGLLPHRYPFLLVDRVTEYVPGEYIKGYKNVTMNEPFFEGHFPGVPVMPGVLIMEALAQAGGILVVKSTDTPVEDKLFLFTGIESVRFRKPVYPGDKLELHCRLLRHKLKLWKMEGFAYVDGKLAAEAVMTAAVTNREDM.

His-55 is a catalytic residue.

The protein belongs to the thioester dehydratase family. FabZ subfamily.

It is found in the cytoplasm. The enzyme catalyses a (3R)-hydroxyacyl-[ACP] = a (2E)-enoyl-[ACP] + H2O. Its function is as follows. Involved in unsaturated fatty acids biosynthesis. Catalyzes the dehydration of short chain beta-hydroxyacyl-ACPs and long chain saturated and unsaturated beta-hydroxyacyl-ACPs. This Nitratidesulfovibrio vulgaris (strain DSM 19637 / Miyazaki F) (Desulfovibrio vulgaris) protein is 3-hydroxyacyl-[acyl-carrier-protein] dehydratase FabZ.